The sequence spans 630 residues: Adenine DNA glycosylase (630 aa).

Over residues 54-72 the composition is skewed to basic and acidic residues; that stretch reads MRKCREKKEAEREAEREAE. The segment at 54-123 is disordered; sequence MRKCREKKEA…ALGGDIEDLF (70 aa). The span at 73 to 123 shows a compositional bias: acidic residues; it reads REAEEEEKAEEAEAEADKEEAEEESEEEEEEEEEEAEAEEEALGGDIEDLF. E168 functions as the Proton donor/acceptor in the catalytic mechanism. [4Fe-4S] cluster is bound by residues C341, C348, C351, and C357. In terms of domain architecture, Nudix hydrolase spans 383–536; sequence PRHDFCCVCV…RKVPPFRLQH (154 aa). The short motif at 427–451 is the Nudix box element; that stretch reads VILNEEADSATRRNAINVYLKEAFR.

It belongs to the Nth/MutY family. The cofactor is [4Fe-4S] cluster.

It localises to the nucleus. It carries out the reaction Hydrolyzes free adenine bases from 7,8-dihydro-8-oxoguanine:adenine mismatched double-stranded DNA, leaving an apurinic site.. Involved in oxidative DNA damage repair. Initiates repair of A*oxoG to C*G by removing the inappropriately paired adenine base from the DNA backbone. Possesses both adenine and 2-OH-A DNA glycosylase activities. The polypeptide is Adenine DNA glycosylase (MYH) (Arabidopsis thaliana (Mouse-ear cress)).